A 163-amino-acid polypeptide reads, in one-letter code: 18 kDa protein (163 aa).

This is 18 kDa protein from Mus musculus (Mouse).